The sequence spans 164 residues: 3-isopropylmalate dehydratase small subunit (164 aa).

Belongs to the LeuD family. LeuD type 2 subfamily. Heterodimer of LeuC and LeuD.

It carries out the reaction (2R,3S)-3-isopropylmalate = (2S)-2-isopropylmalate. The protein operates within amino-acid biosynthesis; L-leucine biosynthesis; L-leucine from 3-methyl-2-oxobutanoate: step 2/4. In terms of biological role, catalyzes the isomerization between 2-isopropylmalate and 3-isopropylmalate, via the formation of 2-isopropylmaleate. The protein is 3-isopropylmalate dehydratase small subunit of Lachnospira eligens (strain ATCC 27750 / DSM 3376 / VPI C15-48 / C15-B4) (Eubacterium eligens).